We begin with the raw amino-acid sequence, 343 residues long: Replication initiation protein (343 aa).

A disordered region spans residues 42–61; it reads ERKRTKRRRGEHSTKPKCEN.

Its function is as follows. Probably functions as an initiator for the IncI1 ColIb-P9 replicon. In Escherichia coli, this protein is Replication initiation protein (repZ).